The chain runs to 69 residues: Large ribosomal subunit protein bL31 (69 aa).

Positions 17, 19, 37, and 40 each coordinate Zn(2+).

This sequence belongs to the bacterial ribosomal protein bL31 family. Type A subfamily. Part of the 50S ribosomal subunit. Zn(2+) is required as a cofactor.

In terms of biological role, binds the 23S rRNA. The sequence is that of Large ribosomal subunit protein bL31 from Thermoanaerobacter pseudethanolicus (strain ATCC 33223 / 39E) (Clostridium thermohydrosulfuricum).